A 286-amino-acid polypeptide reads, in one-letter code: Aminoglycoside N(3)-acetyltransferase III (286 aa).

The protein belongs to the antibiotic N-acetyltransferase family.

The catalysed reaction is a 2-deoxystreptamine antibiotic + acetyl-CoA = an N(3)-acetyl-2-deoxystreptamine antibiotic + CoA + H(+). Its function is as follows. Resistance to antibiotics containing the 2-deoxy-streptamine ring including gentamicin, kanamycin, tobramycin, neomycin and apramycin. The protein is Aminoglycoside N(3)-acetyltransferase III (aacC3) of Salmonella sp.